The following is a 448-amino-acid chain: tRNA(Ile)-lysidine synthase (448 aa).

29–34 (SGGVDS) serves as a coordination point for ATP.

It belongs to the tRNA(Ile)-lysidine synthase family.

Its subcellular location is the cytoplasm. It catalyses the reaction cytidine(34) in tRNA(Ile2) + L-lysine + ATP = lysidine(34) in tRNA(Ile2) + AMP + diphosphate + H(+). Functionally, ligates lysine onto the cytidine present at position 34 of the AUA codon-specific tRNA(Ile) that contains the anticodon CAU, in an ATP-dependent manner. Cytidine is converted to lysidine, thus changing the amino acid specificity of the tRNA from methionine to isoleucine. The sequence is that of tRNA(Ile)-lysidine synthase from Azoarcus sp. (strain BH72).